Reading from the N-terminus, the 89-residue chain is Large ribosomal subunit protein bL27 (89 aa).

Residues 1-21 (MAHKKAGGSSRNGRDSESKRL) are disordered.

The protein belongs to the bacterial ribosomal protein bL27 family.

The sequence is that of Large ribosomal subunit protein bL27 from Bartonella quintana (strain Toulouse) (Rochalimaea quintana).